The chain runs to 194 residues: N-acetyltransferase (194 aa).

The region spanning 9 to 173 (PQVRPGIAED…GRYWDVRWYE (165 aa)) is the N-acetyltransferase domain.

Belongs to the acetyltransferase family. PAT/BAR subfamily.

The protein is N-acetyltransferase (nat) of Streptomyces griseus.